A 509-amino-acid chain; its full sequence is Glutamate--tRNA ligase (509 aa).

A 'HIGH' region motif is present at residues Pro20–Thr30. Zn(2+)-binding residues include Cys117, Cys119, Cys144, and His146. Positions Lys261 to Arg265 match the 'KMSKS' region motif. Lys264 is a binding site for ATP.

It belongs to the class-I aminoacyl-tRNA synthetase family. Glutamate--tRNA ligase type 1 subfamily. In terms of assembly, monomer. Zn(2+) is required as a cofactor.

The protein resides in the cytoplasm. It catalyses the reaction tRNA(Glu) + L-glutamate + ATP = L-glutamyl-tRNA(Glu) + AMP + diphosphate. Functionally, catalyzes the attachment of glutamate to tRNA(Glu) in a two-step reaction: glutamate is first activated by ATP to form Glu-AMP and then transferred to the acceptor end of tRNA(Glu). The sequence is that of Glutamate--tRNA ligase from Psychrobacter cryohalolentis (strain ATCC BAA-1226 / DSM 17306 / VKM B-2378 / K5).